The chain runs to 235 residues: Putative N-acetylmannosamine-6-phosphate 2-epimerase (235 aa).

Belongs to the NanE family.

The enzyme catalyses an N-acyl-D-glucosamine 6-phosphate = an N-acyl-D-mannosamine 6-phosphate. It functions in the pathway amino-sugar metabolism; N-acetylneuraminate degradation; D-fructose 6-phosphate from N-acetylneuraminate: step 3/5. In terms of biological role, converts N-acetylmannosamine-6-phosphate (ManNAc-6-P) to N-acetylglucosamine-6-phosphate (GlcNAc-6-P). This Photobacterium profundum (strain SS9) protein is Putative N-acetylmannosamine-6-phosphate 2-epimerase.